We begin with the raw amino-acid sequence, 622 residues long: Kelch-like protein 14 (622 aa).

The 113-residue stretch at 33–145 folds into the BTB domain; that stretch reads CDVTLTAQGQ…LYTANVTLSL (113 aa). The disordered stretch occupies residues 73 to 108; that stretch reads ALGPGAQDGLGGAPPKEPPPPPQEEPGTPSSSPEDK. Residues 87–96 are compositionally biased toward pro residues; it reads PKEPPPPPQE. 6 Kelch repeats span residues 317 to 366, 367 to 418, 419 to 465, 467 to 512, 514 to 564, and 566 to 614; these read MLLL…EVEN, FLFV…RLDK, NLYV…VHNG, IYIS…VMND, LYAI…VLDD, and IYLV…TVIL.

The protein resides in the cytoplasm. It is found in the cytosol. The protein localises to the endoplasmic reticulum membrane. The protein is Kelch-like protein 14 (KLHL14) of Gallus gallus (Chicken).